The primary structure comprises 100 residues: Large ribosomal subunit protein bL21 (100 aa).

It belongs to the bacterial ribosomal protein bL21 family. As to quaternary structure, part of the 50S ribosomal subunit. Contacts protein L20.

This protein binds to 23S rRNA in the presence of protein L20. The sequence is that of Large ribosomal subunit protein bL21 from Mycoplasma mycoides subsp. mycoides SC (strain CCUG 32753 / NCTC 10114 / PG1).